A 231-amino-acid polypeptide reads, in one-letter code: Ribose-5-phosphate isomerase A (231 aa).

Residues 28-31 (TGST), 83-86 (DGAD), and 96-99 (KGGG) contribute to the substrate site. Catalysis depends on glutamate 105, which acts as the Proton acceptor. A substrate-binding site is contributed by lysine 123.

The protein belongs to the ribose 5-phosphate isomerase family. In terms of assembly, homodimer.

It carries out the reaction aldehydo-D-ribose 5-phosphate = D-ribulose 5-phosphate. It functions in the pathway carbohydrate degradation; pentose phosphate pathway; D-ribose 5-phosphate from D-ribulose 5-phosphate (non-oxidative stage): step 1/1. Functionally, catalyzes the reversible conversion of ribose-5-phosphate to ribulose 5-phosphate. The chain is Ribose-5-phosphate isomerase A from Agrobacterium fabrum (strain C58 / ATCC 33970) (Agrobacterium tumefaciens (strain C58)).